A 336-amino-acid chain; its full sequence is 3-isopropylmalate dehydrogenase (336 aa).

Arg-87, Arg-97, Arg-121, and Asp-211 together coordinate substrate. Positions 211, 235, and 239 each coordinate Mg(2+). 271–283 (GSAPDIAGQGIAD) contributes to the NAD(+) binding site.

It belongs to the isocitrate and isopropylmalate dehydrogenases family. LeuB type 2 subfamily. As to quaternary structure, homodimer. Mg(2+) is required as a cofactor. The cofactor is Mn(2+).

It is found in the cytoplasm. The enzyme catalyses (2R,3S)-3-isopropylmalate + NAD(+) = 4-methyl-2-oxopentanoate + CO2 + NADH. Its pathway is amino-acid biosynthesis; L-leucine biosynthesis; L-leucine from 3-methyl-2-oxobutanoate: step 3/4. In terms of biological role, catalyzes the oxidation of 3-carboxy-2-hydroxy-4-methylpentanoate (3-isopropylmalate) to 3-carboxy-4-methyl-2-oxopentanoate. The product decarboxylates to 4-methyl-2 oxopentanoate. The protein is 3-isopropylmalate dehydrogenase of Mycolicibacterium gilvum (strain PYR-GCK) (Mycobacterium gilvum (strain PYR-GCK)).